Reading from the N-terminus, the 230-residue chain is PKHD-type hydroxylase PD_1553 (230 aa).

The 105-residue stretch at R78–S182 folds into the Fe2OG dioxygenase domain. Fe cation-binding residues include H96, D98, and H163. R173 contacts 2-oxoglutarate.

Fe(2+) is required as a cofactor. The cofactor is L-ascorbate.

In Xylella fastidiosa (strain Temecula1 / ATCC 700964), this protein is PKHD-type hydroxylase PD_1553.